The chain runs to 123 residues: Large ribosomal subunit protein bL12 (123 aa).

The protein belongs to the bacterial ribosomal protein bL12 family. In terms of assembly, homodimer. Part of the ribosomal stalk of the 50S ribosomal subunit. Forms a multimeric L10(L12)X complex, where L10 forms an elongated spine to which 2 to 4 L12 dimers bind in a sequential fashion. Binds GTP-bound translation factors.

Forms part of the ribosomal stalk which helps the ribosome interact with GTP-bound translation factors. Is thus essential for accurate translation. The chain is Large ribosomal subunit protein bL12 from Acholeplasma laidlawii (strain PG-8A).